The primary structure comprises 294 residues: Protoheme IX farnesyltransferase (294 aa).

The next 9 membrane-spanning stretches (helical) occupy residues 24–44 (VVLL…PGWV), 48–68 (LIAF…AINH), 96–116 (ALWF…LFVN), 118–138 (LTAL…TGYL), 146–166 (IVIG…AVTG), 172–192 (ALLL…ALAI), 224–244 (VLLL…WIYL), 245–265 (LGAL…YFTD), and 268–288 (VVAM…FVFL).

The protein belongs to the UbiA prenyltransferase family. Protoheme IX farnesyltransferase subfamily.

The protein localises to the cell inner membrane. It carries out the reaction heme b + (2E,6E)-farnesyl diphosphate + H2O = Fe(II)-heme o + diphosphate. It functions in the pathway porphyrin-containing compound metabolism; heme O biosynthesis; heme O from protoheme: step 1/1. Its function is as follows. Converts heme B (protoheme IX) to heme O by substitution of the vinyl group on carbon 2 of heme B porphyrin ring with a hydroxyethyl farnesyl side group. In Legionella pneumophila (strain Paris), this protein is Protoheme IX farnesyltransferase.